An 824-amino-acid chain; its full sequence is Probable receptor-like protein kinase At5g24010 (824 aa).

An N-terminal signal peptide occupies residues 1–24 (MAFPINLTQTLLFFFCPLLHLSFA). Asparagine 6, asparagine 41, asparagine 204, asparagine 227, and asparagine 291 each carry an N-linked (GlcNAc...) asparagine glycan. Residues 25-406 (AFTPTDNYLI…SSEVVSGKRN (382 aa)) lie on the Extracellular side of the membrane. A helical transmembrane segment spans residues 407–427 (VVWIVVGSVLGGFVFLSLFFL). Topologically, residues 428 to 824 (SVLCLCRRKN…FSQLMTNAGR (397 aa)) are cytoplasmic. The tract at residues 440-467 (TRSSESTGWTPLRRFRGSSNSRTTERTV) is disordered. The span at 456-467 (GSSNSRTTERTV) shows a compositional bias: polar residues. Positions 489-764 (FDRSLVIGVG…VLWNLEHVLQ (276 aa)) constitute a Protein kinase domain. ATP contacts are provided by residues 495–503 (IGVGGFGMV) and lysine 517. Aspartate 613 acts as the Proton acceptor in catalysis. Residues 777 to 803 (DYGDVTDPRTARQGLSNGSNIERDYGD) form a disordered region.

Belongs to the protein kinase superfamily. Ser/Thr protein kinase family.

The protein localises to the membrane. This Arabidopsis thaliana (Mouse-ear cress) protein is Probable receptor-like protein kinase At5g24010.